The chain runs to 190 residues: Potassium-transporting ATPase KdpC subunit (190 aa).

Residues 15–35 (LWILTALIYPAIVLVIGQLVF) traverse the membrane as a helical segment.

This sequence belongs to the KdpC family. The system is composed of three essential subunits: KdpA, KdpB and KdpC.

The protein localises to the cell inner membrane. Its function is as follows. Part of the high-affinity ATP-driven potassium transport (or Kdp) system, which catalyzes the hydrolysis of ATP coupled with the electrogenic transport of potassium into the cytoplasm. This subunit acts as a catalytic chaperone that increases the ATP-binding affinity of the ATP-hydrolyzing subunit KdpB by the formation of a transient KdpB/KdpC/ATP ternary complex. This is Potassium-transporting ATPase KdpC subunit from Synechocystis sp. (strain ATCC 27184 / PCC 6803 / Kazusa).